A 538-amino-acid polypeptide reads, in one-letter code: MKLESIQVPIKNNVLADYWSPNTAIHQFFEYEFNDQAFEKRAKHLAQHARDQKELTAIIRQFMEPLGLSQKANEHLQQLEQGAMVIIGGQQAGILTGPLYSVHKAISVIVLAKEQSVKLQRSVVPVFWIAGEDHDLEEINHTYTVHGELLKKRAYSERSRRKTMASATMLNKESMTQFIHTVVRDIGETEYTEALIKQLVDVLNESETFTDFFARLMNQLFKDEGLLLIDAADYNFRQYESTNFTHIIQHSEEIARVVTEKEEQLERTGYGKPILATREAANLFYVEDGERHLLERKNDLFINLAANLKFTREELLEIAEKYPERLSNNVVSRPLMQEMTFPVLAFVGGPGELAYWATLKSAFSVLDLQMPIFAPRLHMTIVTRHVEQLLREHQLSVTDVWNGKALEMKERFIHDVQDIEAKRQIQAMEQLLAEKYSELASYLEEQHLTLDKILVKNQENHAKQFDYLQQKIEQTVLDKHETTIRKFTTLQNELYPNEGFQERTYNPYQYFNEFGPMLIAEMLKQNYSIGKHHYLLYL.

Positions 419 to 445 (IEAKRQIQAMEQLLAEKYSELASYLEE) form a coiled coil.

It belongs to the BshC family.

Its function is as follows. Involved in bacillithiol (BSH) biosynthesis. May catalyze the last step of the pathway, the addition of cysteine to glucosamine malate (GlcN-Mal) to generate BSH. The chain is Putative cysteine ligase BshC from Lysinibacillus sphaericus (strain C3-41).